A 116-amino-acid polypeptide reads, in one-letter code: Large ribosomal subunit protein uL18 (116 aa).

It belongs to the universal ribosomal protein uL18 family. In terms of assembly, part of the 50S ribosomal subunit; part of the 5S rRNA/L5/L18/L25 subcomplex. Contacts the 5S and 23S rRNAs.

In terms of biological role, this is one of the proteins that bind and probably mediate the attachment of the 5S RNA into the large ribosomal subunit, where it forms part of the central protuberance. The polypeptide is Large ribosomal subunit protein uL18 (Shewanella baltica (strain OS223)).